The chain runs to 516 residues: Gamma-aminobutyrate transaminase 1, mitochondrial (516 aa).

Residues 1–47 (MVIARGLLRSNASSSSSQAINLLKYVTSTGSLQGHTQNLCDASTRHF) constitute a mitochondrion transit peptide. 171-172 (GS) contributes to the pyridoxal 5'-phosphate binding site. Residue Tyr-204 coordinates substrate. Position 311 (Asp-311) interacts with pyridoxal 5'-phosphate. Lys-340 is a substrate binding site. The residue at position 340 (Lys-340) is an N6-(pyridoxal phosphate)lysine.

It belongs to the class-III pyridoxal-phosphate-dependent aminotransferase family. As to expression, expressed in roots, stems and panicles.

Its subcellular location is the mitochondrion. It carries out the reaction 4-aminobutanoate + pyruvate = succinate semialdehyde + L-alanine. The catalysed reaction is 4-aminobutanoate + glyoxylate = succinate semialdehyde + glycine. Transaminase that degrades gamma-amino butyric acid (GABA) and uses pyruvate as amino-group acceptor, but not 2-oxoglutarate. Not involved in the interaction with blast fungus. The polypeptide is Gamma-aminobutyrate transaminase 1, mitochondrial (OSL2) (Oryza sativa subsp. japonica (Rice)).